A 75-amino-acid chain; its full sequence is Translational regulator CsrA (75 aa).

This sequence belongs to the CsrA/RsmA family. As to quaternary structure, homodimer; the beta-strands of each monomer intercalate to form a hydrophobic core, while the alpha-helices form wings that extend away from the core.

The protein localises to the cytoplasm. Its function is as follows. A translational regulator that binds mRNA to regulate translation initiation and/or mRNA stability. Usually binds in the 5'-UTR at or near the Shine-Dalgarno sequence preventing ribosome-binding, thus repressing translation. Its main target seems to be the major flagellin gene, while its function is anatagonized by FliW. This chain is Translational regulator CsrA, found in Alkaliphilus metalliredigens (strain QYMF).